The primary structure comprises 470 residues: Acyltransferase BOA11 (470 aa).

Catalysis depends on His156, which acts as the Proton acceptor.

The protein belongs to the plant acyltransferase family.

Its pathway is polyketide biosynthesis. Its function is as follows. Acyltransferase; part of the gene cluster B that mediates the biosynthesis of botcinic acid and its botcinin derivatives, acetate-derived polyketides that contribute to virulence when combined with the sesquiterpene botrydial. Botcinic acid and its derivatives have been shown to induce chlorosis and necrosis during host plant infection, but also have antifungal activities. Two polyketide synthases, BOA6 and BOA9, are involved in the biosynthesis of botcinins. BOA6 mediates the formation of the per-methylated tetraketide core by condensation of four units of malonyl-CoA with one unit of acetyl-CoA, which would be methylated in activated methylene groups to yield a bicyclic acid intermediate that could then either be converted to botrylactone derivatives or lose the starter acetate unit through a retro-Claisen type C-C bond cleavage to yield botcinin derivatives. The second polyketide synthase, BOA9, is probably required for the biosynthesis of the tetraketide side chain of botcinins. The methyltransferase (MT) domain within BOA6 is probably responsible for the incorporation of four methyl groups. The trans-enoyl reductase BOA5 might take over the enoyl reductase function of BOA6 that misses an ER domain. The monooxygenases BOA2, BOA3 and BOA4 might be involved in further hydroxylations at C4, C5 and C8, whereas BOA7, close to BOA9, could potentially be involved in the hydroxylation at C4 in the side chain of botcinins. The protein is Acyltransferase BOA11 of Botryotinia fuckeliana (strain B05.10) (Noble rot fungus).